A 727-amino-acid chain; its full sequence is Protein TITANIA (727 aa).

Positions 1-136 (MFGDSDGSKD…LASLLQPVPA (136 aa)) are disordered. Pro residues predominate over residues 14–25 (GAPPSTTDPPFP). Over residues 67–88 (DDGKHCVERDFLHLSAPKRGDP) the composition is skewed to basic and acidic residues. Residues 104–117 (DSLQLSLSLNSDGP) are compositionally biased toward low complexity. A PHD-type zinc finger spans residues 406–470 (ACTCSVCHKF…QFQCLACNHS (65 aa)). A coiled-coil region spans residues 629 to 697 (VKCKEAEAKL…LEELKMLENS (69 aa)).

In terms of tissue distribution, widely expressed.

The protein resides in the nucleus. Probable transcription factor that functions as a regulator of metal transporter genes responsible for essential metals delivery to shoots and normal plant growth. Required for the maintenance of metal transporter gene expression, such as IRT1, IRT2, ZIP1, ZIP9, NRAMP1 and NRAMP5. The chain is Protein TITANIA from Oryza sativa subsp. japonica (Rice).